The sequence spans 168 residues: Peptidoglycan-associated lipoprotein (168 aa).

The signal sequence occupies residues 1 to 24 (MGRIAALTRNPVMIALVAMLAIAG). The N-palmitoyl cysteine moiety is linked to residue Cys25. Cys25 is lipidated: S-diacylglycerol cysteine. An OmpA-like domain is found at 50–167 (AQDFTVNIGD…RAVTTLSGAG (118 aa)).

The protein belongs to the Pal lipoprotein family. In terms of assembly, the Tol-Pal system is composed of five core proteins: the inner membrane proteins TolA, TolQ and TolR, the periplasmic protein TolB and the outer membrane protein Pal. They form a network linking the inner and outer membranes and the peptidoglycan layer.

It is found in the cell outer membrane. Part of the Tol-Pal system, which plays a role in outer membrane invagination during cell division and is important for maintaining outer membrane integrity. In Mesorhizobium japonicum (strain LMG 29417 / CECT 9101 / MAFF 303099) (Mesorhizobium loti (strain MAFF 303099)), this protein is Peptidoglycan-associated lipoprotein.